The following is a 79-amino-acid chain: Endothelin-2 (79 aa).

Residues 1-23 are disordered; it reads PEQTAPYGLGNPPRRRRRSLPRR. The segment at 24-39 is endothelin-like; it reads CQCSSARDPSCATFCL. Residues 51 to 79 are disordered; that stretch reads SRKSPADVFQTGKTGATRGELLQRLRDIS.

The protein belongs to the endothelin/sarafotoxin family.

It localises to the secreted. Its function is as follows. Endothelins are endothelium-derived vasoconstrictor peptides. In Macaca fascicularis (Crab-eating macaque), this protein is Endothelin-2 (EDN2).